A 1030-amino-acid chain; its full sequence is Carbamoyl phosphate synthase arginine-specific large chain (1030 aa).

The interval 1–401 (MPKDTSISSI…AIQKAAASLE (401 aa)) is carboxyphosphate synthetic domain. ATP is bound by residues Arg-129, Arg-169, Gly-175, Gly-176, Lys-208, Ile-210, Glu-215, Gly-241, Val-242, His-243, Gln-284, and Glu-298. The 195-residue stretch at 133 to 327 (RSLMNELKQP…IAKMAAKLAV (195 aa)) folds into the ATP-grasp 1 domain. 3 residues coordinate Mg(2+): Gln-284, Glu-298, and Asn-300. 3 residues coordinate Mn(2+): Gln-284, Glu-298, and Asn-300. The interval 402–548 (LKNIGTHLPE…YSTYFGETDG (147 aa)) is oligomerization domain. A carbamoyl phosphate synthetic domain region spans residues 549–928 (DISRKEKKRA…ALKKIYTRVW (380 aa)). The ATP-grasp 2 domain occupies 675 to 863 (YQLLDELGLK…MIPLATRLLA (189 aa)). Arg-711, Gln-748, Val-750, Glu-754, Gly-779, Val-780, His-781, Ser-782, Gln-822, and Glu-834 together coordinate ATP. Positions 822, 834, and 836 each coordinate Mg(2+). Mn(2+) is bound by residues Gln-822, Glu-834, and Asn-836. An MGS-like domain is found at 925–1027 (TRVWSQKGSI…KDLYKKEVAS (103 aa)). Positions 929-1030 (SQKGSIYLQN…YKKEVASCTQ (102 aa)) are allosteric domain.

Belongs to the CarB family. As to quaternary structure, composed of two chains; the small (or glutamine) chain promotes the hydrolysis of glutamine to ammonia, which is used by the large (or ammonia) chain to synthesize carbamoyl phosphate. Tetramer of heterodimers (alpha,beta)4. It depends on Mg(2+) as a cofactor. The cofactor is Mn(2+).

The enzyme catalyses hydrogencarbonate + L-glutamine + 2 ATP + H2O = carbamoyl phosphate + L-glutamate + 2 ADP + phosphate + 2 H(+). It carries out the reaction hydrogencarbonate + NH4(+) + 2 ATP = carbamoyl phosphate + 2 ADP + phosphate + 2 H(+). It participates in amino-acid biosynthesis; L-arginine biosynthesis; carbamoyl phosphate from bicarbonate: step 1/1. In terms of biological role, large subunit of the glutamine-dependent carbamoyl phosphate synthetase (CPSase). CPSase catalyzes the formation of carbamoyl phosphate from the ammonia moiety of glutamine, carbonate, and phosphate donated by ATP, constituting the first step of the biosynthetic pathway leading to arginine and/or urea. The large subunit (synthetase) binds the substrates ammonia (free or transferred from glutamine from the small subunit), hydrogencarbonate and ATP and carries out an ATP-coupled ligase reaction, activating hydrogencarbonate by forming carboxy phosphate which reacts with ammonia to form carbamoyl phosphate. In Bacillus subtilis (strain 168), this protein is Carbamoyl phosphate synthase arginine-specific large chain.